We begin with the raw amino-acid sequence, 474 residues long: Mercuric reductase (474 aa).

Positions 19, 39, and 44 each coordinate FAD. A disulfide bridge links cysteine 45 with cysteine 50. FAD-binding residues include lysine 54, alanine 119, aspartate 315, and valine 323. Cysteine 471 and cysteine 472 together coordinate Hg(2+).

It belongs to the class-I pyridine nucleotide-disulfide oxidoreductase family. As to quaternary structure, homodimer. The cofactor is FAD.

It carries out the reaction Hg + NADP(+) + H(+) = Hg(2+) + NADPH. In terms of biological role, resistance to Hg(2+) in bacteria appears to be governed by a specialized system which includes mercuric reductase. MerA protein is responsible for volatilizing mercury as Hg(0). The chain is Mercuric reductase (merA) from Streptomyces lividans.